A 457-amino-acid chain; its full sequence is Adenylosuccinate synthetase isozyme 1 (457 aa).

A disordered region spans residues 1-25 (MSGTRASNDRPPSAGGVKRGRLQHE). GTP contacts are provided by residues 42–48 (GDEGKGK) and 70–72 (GHT). The active-site Proton acceptor is D43. Mg(2+) is bound by residues D43 and G70. D43 contacts substrate. IMP is bound by residues 43 to 46 (DEGK), 68 to 71 (NAGH), T163, R177, N256, T271, and R335. H71 serves as the catalytic Proton donor. 331–337 (VTTGRKR) is a binding site for substrate. GTP contacts are provided by residues R337, 363 to 365 (KLD), and 445 to 448 (GVGK).

The protein belongs to the adenylosuccinate synthetase family. As to quaternary structure, homodimer. It depends on Mg(2+) as a cofactor. As to expression, predominantly expressed in the striated muscle tissues.

The protein localises to the cytoplasm. It catalyses the reaction IMP + L-aspartate + GTP = N(6)-(1,2-dicarboxyethyl)-AMP + GDP + phosphate + 2 H(+). The protein operates within purine metabolism; AMP biosynthesis via de novo pathway; AMP from IMP: step 1/2. In terms of biological role, component of the purine nucleotide cycle (PNC), which interconverts IMP and AMP to regulate the nucleotide levels in various tissues, and which contributes to glycolysis and ammoniagenesis. Catalyzes the first committed step in the biosynthesis of AMP from IMP. In Sus scrofa (Pig), this protein is Adenylosuccinate synthetase isozyme 1.